We begin with the raw amino-acid sequence, 505 residues long: Lysine--tRNA ligase (505 aa).

Mg(2+) is bound by residues glutamate 415 and glutamate 422.

The protein belongs to the class-II aminoacyl-tRNA synthetase family. In terms of assembly, homodimer. It depends on Mg(2+) as a cofactor.

The protein localises to the cytoplasm. It carries out the reaction tRNA(Lys) + L-lysine + ATP = L-lysyl-tRNA(Lys) + AMP + diphosphate. The polypeptide is Lysine--tRNA ligase (Xanthomonas oryzae pv. oryzae (strain MAFF 311018)).